Consider the following 279-residue polypeptide: Large ribosomal subunit protein uL2 (279 aa).

The disordered stretch occupies residues 223–279 (VVMNPVDHPHGGGEGRTSGGRHPVTPWGKPTKGKRTRSNKKTDSLIMRSRHLAKKKR). Basic residues predominate over residues 270-279 (RSRHLAKKKR).

The protein belongs to the universal ribosomal protein uL2 family. As to quaternary structure, part of the 50S ribosomal subunit. Forms a bridge to the 30S subunit in the 70S ribosome.

Its function is as follows. One of the primary rRNA binding proteins. Required for association of the 30S and 50S subunits to form the 70S ribosome, for tRNA binding and peptide bond formation. It has been suggested to have peptidyltransferase activity; this is somewhat controversial. Makes several contacts with the 16S rRNA in the 70S ribosome. The polypeptide is Large ribosomal subunit protein uL2 (Rhodospirillum rubrum (strain ATCC 11170 / ATH 1.1.1 / DSM 467 / LMG 4362 / NCIMB 8255 / S1)).